We begin with the raw amino-acid sequence, 574 residues long: Enolase 4 (574 aa).

The span at 165 to 175 (EKERRQMEREA) shows a compositional bias: basic and acidic residues. The disordered stretch occupies residues 165–221 (EKERRQMEREASPMPLQPEPSPVTSPAPGKKKGSGKGKKAAVVEKPIPPEETPEAVV). Positions 179-189 (PLQPEPSPVTS) are enriched in pro residues. Basic residues predominate over residues 193–203 (GKKKGSGKGKK). Glu-287 contacts substrate. The active-site Proton acceptor is Lys-467. Residue Lys-518 participates in substrate binding.

The protein belongs to the enolase family.

The enzyme catalyses (2R)-2-phosphoglycerate = phosphoenolpyruvate + H2O. It participates in carbohydrate degradation; glycolysis; pyruvate from D-glyceraldehyde 3-phosphate: step 4/5. This chain is Enolase 4 (eno4), found in Xenopus tropicalis (Western clawed frog).